Reading from the N-terminus, the 134-residue chain is Cytochrome b5 isoform B (134 aa).

The 77-residue stretch at 5–81 (AKIFTLSEVS…MEQYYVGEID (77 aa)) folds into the Cytochrome b5 heme-binding domain. Residues histidine 40 and histidine 64 each contribute to the heme site. Residues 107 to 127 (FIIKLLQFLVPLAILGLAVGI) traverse the membrane as a helical segment.

It belongs to the cytochrome b5 family. As to quaternary structure, interacts with CER1, FAH1, FAH2 and BI-1.

Its subcellular location is the endoplasmic reticulum membrane. Functionally, membrane bound hemoprotein which function as an electron carrier for several membrane bound oxygenases, including fatty acid desaturases. The protein is Cytochrome b5 isoform B of Arabidopsis thaliana (Mouse-ear cress).